We begin with the raw amino-acid sequence, 125 residues long: S-adenosylmethionine decarboxylase proenzyme (125 aa).

The Schiff-base intermediate with substrate; via pyruvic acid role is filled by S71. S71 bears the Pyruvic acid (Ser); by autocatalysis mark. H76 acts as the Proton acceptor; for processing activity in catalysis. Residue C91 is the Proton donor; for catalytic activity of the active site.

This sequence belongs to the prokaryotic AdoMetDC family. Type 1 subfamily. As to quaternary structure, heterotetramer of two alpha and two beta chains arranged as a dimer of alpha/beta heterodimers. Requires pyruvate as cofactor. Is synthesized initially as an inactive proenzyme. Formation of the active enzyme involves a self-maturation process in which the active site pyruvoyl group is generated from an internal serine residue via an autocatalytic post-translational modification. Two non-identical subunits are generated from the proenzyme in this reaction, and the pyruvate is formed at the N-terminus of the alpha chain, which is derived from the carboxyl end of the proenzyme. The post-translation cleavage follows an unusual pathway, termed non-hydrolytic serinolysis, in which the side chain hydroxyl group of the serine supplies its oxygen atom to form the C-terminus of the beta chain, while the remainder of the serine residue undergoes an oxidative deamination to produce ammonia and the pyruvoyl group blocking the N-terminus of the alpha chain.

It carries out the reaction S-adenosyl-L-methionine + H(+) = S-adenosyl 3-(methylsulfanyl)propylamine + CO2. The protein operates within amine and polyamine biosynthesis; S-adenosylmethioninamine biosynthesis; S-adenosylmethioninamine from S-adenosyl-L-methionine: step 1/1. Catalyzes the decarboxylation of S-adenosylmethionine to S-adenosylmethioninamine (dcAdoMet), the propylamine donor required for the synthesis of the polyamines spermine and spermidine from the diamine putrescine. The chain is S-adenosylmethionine decarboxylase proenzyme from Pyrobaculum islandicum (strain DSM 4184 / JCM 9189 / GEO3).